Here is a 223-residue protein sequence, read N- to C-terminus: Riboflavin kinase (223 aa).

A unknown region spans residues 1–89; sequence MHRINALKHL…KHIFCGDEDK (89 aa). Positions 90–223 are riboflavin kinase; it reads VELYGNVITG…IMIEDRSACE (134 aa). 99–104 provides a ligand contact to CDP; that stretch reads GLGEGQ. Positions 128 and 130 each coordinate Mg(2+). Positions 185 and 193 each coordinate FMN. 198–201 lines the CDP pocket; it reads VHLR.

It belongs to the archaeal riboflavin kinase family. Mg(2+) serves as cofactor.

It catalyses the reaction riboflavin + CTP = CDP + FMN + H(+). The protein operates within cofactor biosynthesis; FMN biosynthesis; FMN from riboflavin (CTP route): step 1/1. Catalyzes the CTP-dependent phosphorylation of riboflavin (vitamin B2) to form flavin mononucleotide (FMN). In Methanococcoides burtonii (strain DSM 6242 / NBRC 107633 / OCM 468 / ACE-M), this protein is Riboflavin kinase (ribK).